The sequence spans 420 residues: Nucleobindin-2 (420 aa).

A signal peptide spans M1 to A24. A DNA-binding region spans residues K171–P223. The span at L195–K212 shows a compositional bias: basic and acidic residues. Residues L195–S225 are disordered. The interval K213–I420 is binds to necdin. EF-hand domains follow at residues P241–K276 and E293–L328. Ca(2+) contacts are provided by D254 and N256. The residue at position 257 (S257) is a Phosphoserine. Ca(2+)-binding residues include D258, E265, D306, N308, D310, and E317. Residues E304–E334 carry the GBA motif. Phosphoserine is present on S332. A disordered region spans residues Q398–I420.

Belongs to the nucleobindin family. In terms of assembly, interacts (via GBA motif) with guanine nucleotide-binding protein G(i) alpha subunit GNAI3. Preferentially interacts with inactive rather than active GNAI3. Interaction with GNAI3 is inhibited when NUCB2 binds calcium, probably due to a conformational change which renders the GBA motif inaccessible. Binds to the postmitotic growth suppressor NDN; coexpression abolishes NUCB2 secretion. Interacts with MC4R. In terms of tissue distribution, predominantly expressed in spleen, testis and normal stomach.

Its subcellular location is the golgi apparatus. The protein localises to the membrane. The protein resides in the cytoplasm. It localises to the secreted. It is found in the endoplasmic reticulum. Its subcellular location is the nucleus envelope. Calcium-binding protein which may have a role in calcium homeostasis. Acts as a non-receptor guanine nucleotide exchange factor which binds to and activates guanine nucleotide-binding protein (G-protein) alpha subunit GNAI3. Its function is as follows. Anorexigenic peptide, seems to play an important role in hypothalamic pathways regulating food intake and energy homeostasis, acting in a leptin-independent manner. May also exert hypertensive roles and modulate blood pressure through directly acting on peripheral arterial resistance. In intestinal epithelial cells, plays a role in the inhibition of hepatic glucose production via MC4R receptor leading to increased cyclic adenosine monophosphate (cAMP) levels and glucagon-like peptide 1 (GLP-1) secretion. The protein is Nucleobindin-2 of Homo sapiens (Human).